Reading from the N-terminus, the 256-residue chain is Protein FixA (256 aa).

This sequence belongs to the ETF beta-subunit/FixA family. Heterodimer of FixA and FixB.

Its pathway is amine and polyamine metabolism; carnitine metabolism. In terms of biological role, required for anaerobic carnitine reduction. May bring reductant to CaiA. The sequence is that of Protein FixA from Escherichia coli O6:H1 (strain CFT073 / ATCC 700928 / UPEC).